Reading from the N-terminus, the 539-residue chain is Tripartite motif-containing protein 26 (539 aa).

Residues Cys-16–Lys-57 form an RING-type zinc finger. The B box-type zinc finger occupies Gln-97–Met-138. Residues Cys-102, His-105, Cys-124, and His-130 each contribute to the Zn(2+) site. Residues Ile-188–Arg-227 adopt a coiled-coil conformation. The 245-residue stretch at Arg-295–Pro-539 folds into the B30.2/SPRY domain. The disordered stretch occupies residues Arg-376–Cys-437. Positions Ser-380–Leu-434 are enriched in acidic residues.

This sequence belongs to the TRIM/RBCC family. As to quaternary structure, interacts with TBK1; this interaction bridges together TBK1 and NEMO in order to activate TBK1. Interacts with INCA1. Post-translationally, autoubiquitinates upon viral infection. In turn, autoubiquitinated TRIM26 recruits NEMO and bridges TBK1-NEMO interaction.

Its subcellular location is the cytoplasm. It localises to the nucleus. The enzyme catalyses S-ubiquitinyl-[E2 ubiquitin-conjugating enzyme]-L-cysteine + [acceptor protein]-L-lysine = [E2 ubiquitin-conjugating enzyme]-L-cysteine + N(6)-ubiquitinyl-[acceptor protein]-L-lysine.. Its function is as follows. E3 ubiquitin-protein ligase which regulates the IFN-beta production and antiviral response downstream of various DNA-encoded pattern-recognition receptors (PRRs). Also plays a central role in determining the response to different forms of oxidative stress by controlling levels of DNA glycosylases NEIL1, NEIL3 and NTH1 that are involved in repair of damaged DNA. Promotes nuclear IRF3 ubiquitination and proteasomal degradation. Bridges together TBK1 and NEMO during the innate response to viral infection leading to the activation of TBK1. Positively regulates LPS-mediated inflammatory innate immune response by catalyzing the 'Lys-11'-linked polyubiquitination of TAB1 to enhance its activation and subsequent NF-kappa-B and MAPK signaling. In a manner independent of its catalytic activity, inhibits WWP2, a SOX2-directed E3 ubiquitin ligase, and thus protects SOX2 from polyubiquitination and proteasomal degradation. Ubiquitinates the histone acetyltransferase protein complex component PHF20 and thereby triggers its degradation in the nucleus after its recruitment by the histone demethylase KDM6B, serving as a scaffold protein. Upon induction by TGF-beta, ubiquitinates the TFIID component TAF7 for proteasomal degradation. Induces ferroptosis by ubiquitinating SLC7A11, a critical protein for lipid reactive oxygen species (ROS) scavenging. Inhibits directly hepatitis B virus replication by mediating HBX ubiquitination and subsequent degradation. In terms of biological role, (Microbial infection) Promotes herpes simplex virus type 2/HHV-2 infection in vaginal epithelial cells by decreasing the nuclear localization of IRF3, the primary mediator of type I interferon activation. This is Tripartite motif-containing protein 26 (TRIM26) from Homo sapiens (Human).